We begin with the raw amino-acid sequence, 668 residues long: COBRA-like protein 11 (668 aa).

Residues 1 to 29 (MKKLRYVHLNLLLLLLPLINLQFPTLSLA) form the signal peptide. N69, N125, N254, N318, N329, N358, N412, N432, N473, N552, N560, and N579 each carry an N-linked (GlcNAc...) asparagine glycan. S636 carries the GPI-anchor amidated serine lipid modification. Residues 637–668 (SGMRLSGIRFLPSILLAITTFHAITDRLLTGV) constitute a propeptide, removed in mature form.

The protein belongs to the COBRA family. As to expression, mostly expressed in flowers, stamen, anthers and pollen, and, to a lower extent, possibly in roots, stems, leaves and siliques.

It is found in the cell membrane. In terms of biological role, involved in the deposition of apical pectin cap and cellulose microfibrils in pollen tubes. Implicated in pollen tubes growth in the female transmitting tract of pistil and toward micropyles, via the perception of ovule guidance cues. The chain is COBRA-like protein 11 from Arabidopsis thaliana (Mouse-ear cress).